Consider the following 281-residue polypeptide: Putative phosphatase/phosphodiesterase MG246 (281 aa).

4 residues coordinate Fe cation: Asp-11, Glu-42, Asn-43, and Asn-70. His-71 (proton donor) is an active-site residue. Fe cation contacts are provided by His-157, His-182, and His-184.

The protein belongs to the YmdB-like family. It depends on Fe(3+) as a cofactor.

This Mycoplasma genitalium (strain ATCC 33530 / DSM 19775 / NCTC 10195 / G37) (Mycoplasmoides genitalium) protein is Putative phosphatase/phosphodiesterase MG246.